Here is a 108-residue protein sequence, read N- to C-terminus: Cuticle protein AM1199 (108 aa).

A Pyrrolidone carboxylic acid modification is found at Gln-1. One can recognise a Chitin-binding type R&amp;R domain in the interval 26 to 91 (DGNFGYDFET…AESPLIPTPH (66 aa)). A glycan (O-linked (HexNAc) threonine) is linked at Thr-89.

Arthrodial membrane.

In Cancer pagurus (Rock crab), this protein is Cuticle protein AM1199.